The sequence spans 286 residues: Structure-specific endonuclease subunit SLX1 (286 aa).

One can recognise a GIY-YIG domain in the interval 15 to 98; it reads SFYGVYILKS…QHAYQTRHIN (84 aa).

It belongs to the SLX1 family. In terms of assembly, forms a heterodimer with SLX4. The cofactor is a divalent metal cation.

The protein resides in the nucleus. Functionally, catalytic subunit of the SLX1-SLX4 structure-specific endonuclease that resolves DNA secondary structures generated during DNA repair and recombination. Has endonuclease activity towards branched DNA substrates, introducing single-strand cuts in duplex DNA close to junctions with ss-DNA. The sequence is that of Structure-specific endonuclease subunit SLX1 from Candida dubliniensis (strain CD36 / ATCC MYA-646 / CBS 7987 / NCPF 3949 / NRRL Y-17841) (Yeast).